The primary structure comprises 184 residues: Thymidine kinase (184 aa).

Residues glycine 10–threonine 17, histidine 53, and aspartate 83–glutamine 86 contribute to the ATP site. Residue glutamate 84 is the Proton acceptor of the active site. Histidine 115 is a substrate binding site. Residues cysteine 140 and cysteine 143 each coordinate Zn(2+). Residues isoleucine 161–glycine 164 and tyrosine 169 each bind substrate. 2 residues coordinate Zn(2+): cysteine 173 and cysteine 176.

Belongs to the thymidine kinase family. As to quaternary structure, homotetramer.

Its subcellular location is the cytoplasm. The enzyme catalyses thymidine + ATP = dTMP + ADP + H(+). This is Thymidine kinase (tdk) from Thermotoga maritima (strain ATCC 43589 / DSM 3109 / JCM 10099 / NBRC 100826 / MSB8).